Here is a 487-residue protein sequence, read N- to C-terminus: Argininosuccinate lyase (487 aa).

Belongs to the lyase 1 family. Argininosuccinate lyase subfamily.

It is found in the cytoplasm. The enzyme catalyses 2-(N(omega)-L-arginino)succinate = fumarate + L-arginine. It participates in amino-acid biosynthesis; L-arginine biosynthesis; L-arginine from L-ornithine and carbamoyl phosphate: step 3/3. This chain is Argininosuccinate lyase, found in Natranaerobius thermophilus (strain ATCC BAA-1301 / DSM 18059 / JW/NM-WN-LF).